Here is a 293-residue protein sequence, read N- to C-terminus: 4-diphosphocytidyl-2-C-methyl-D-erythritol kinase (293 aa).

Residue Lys-16 is part of the active site. Residue 99–109 (PMGAGLGGGSS) coordinates ATP. Residue Asp-141 is part of the active site.

The protein belongs to the GHMP kinase family. IspE subfamily.

The catalysed reaction is 4-CDP-2-C-methyl-D-erythritol + ATP = 4-CDP-2-C-methyl-D-erythritol 2-phosphate + ADP + H(+). It functions in the pathway isoprenoid biosynthesis; isopentenyl diphosphate biosynthesis via DXP pathway; isopentenyl diphosphate from 1-deoxy-D-xylulose 5-phosphate: step 3/6. Its function is as follows. Catalyzes the phosphorylation of the position 2 hydroxy group of 4-diphosphocytidyl-2C-methyl-D-erythritol. The chain is 4-diphosphocytidyl-2-C-methyl-D-erythritol kinase from Paraburkholderia xenovorans (strain LB400).